Here is a 280-residue protein sequence, read N- to C-terminus: Bis(5'-nucleosyl)-tetraphosphatase, symmetrical (280 aa).

Belongs to the Ap4A hydrolase family.

It catalyses the reaction P(1),P(4)-bis(5'-adenosyl) tetraphosphate + H2O = 2 ADP + 2 H(+). Its function is as follows. Hydrolyzes diadenosine 5',5'''-P1,P4-tetraphosphate to yield ADP. This Escherichia coli O17:K52:H18 (strain UMN026 / ExPEC) protein is Bis(5'-nucleosyl)-tetraphosphatase, symmetrical.